Consider the following 200-residue polypeptide: Large ribosomal subunit protein bL25 (200 aa).

Residues 1–20 (MEARELKANVRKESGKEQAR) are disordered.

The protein belongs to the bacterial ribosomal protein bL25 family. CTC subfamily. As to quaternary structure, part of the 50S ribosomal subunit; part of the 5S rRNA/L5/L18/L25 subcomplex. Contacts the 5S rRNA. Binds to the 5S rRNA independently of L5 and L18.

In terms of biological role, this is one of the proteins that binds to the 5S RNA in the ribosome where it forms part of the central protuberance. The sequence is that of Large ribosomal subunit protein bL25 from Syntrophus aciditrophicus (strain SB).